The following is a 442-amino-acid chain: Citrate transporter CitP (442 aa).

The next 13 membrane-spanning stretches (helical) occupy residues Ile27 to Ser47, Ile59 to Phe79, Leu83 to Ile103, Phe114 to Phe134, Val151 to Gly171, Ala177 to Leu197, Ser209 to Ile229, Tyr267 to Leu287, Gly293 to Leu313, Val321 to Gly341, Val349 to Ile369, Ala387 to Ala409, and Met421 to Met441.

Belongs to the 2-hydroxycarboxylate transporter (2-HCT) (TC 2.A.24) family.

The protein resides in the cell membrane. The enzyme catalyses (R)-lactate(in) + citrate(out) = (R)-lactate(out) + citrate(in). It carries out the reaction (S)-lactate(in) + citrate(out) = (S)-lactate(out) + citrate(in). The catalysed reaction is citrate(in) + H(+)(in) = citrate(out) + H(+)(out). The transport of citrate is unaffected by the presence of citrate in the growth media. Functionally, secondary transporter involved in citrate metabolism. During cometabolism of citrate and glucose, catalyzes the uptake of divalent citrate into the cell coupled to the exit of monovalent lactate, the end product of glycolysis in L.lactis. The citrate/lactate exchange is electrogenic and results in the generation of a membrane potential. Plays an important role in resistance against lactate toxicity at low pH. In the absence of glucose, i.e. when no lactate is produced, CitP catalyzes the uptake of citrate in exchange with the citrate metabolism intermediates pyruvate and alpha-acetolactate, and the end product acetate. In the absence of glucose, CitP can also catalyze the proton-dependent transport of citrate. In vitro, shows a broad substrate specificity. Can transport a wide variety of mono- and dicarboxylates of the form X-CR(2)-COO(-), where X represents OH (2-hydroxy acid), O (2-keto acid), or H (acid) and R groups differ in size, hydrophobicity and composition. Many of the substrates are intermediates or products of amino acid metabolism, suggesting that CitP may have a broader physiological function than its role in citrate metabolism. The sequence is that of Citrate transporter CitP from Lactococcus lactis subsp. lactis (Streptococcus lactis).